The primary structure comprises 259 residues: Ribosomal RNA small subunit methyltransferase A (259 aa).

Asn13, Leu15, Gly39, Glu60, Asp84, and Asn101 together coordinate S-adenosyl-L-methionine.

The protein belongs to the class I-like SAM-binding methyltransferase superfamily. rRNA adenine N(6)-methyltransferase family. RsmA subfamily.

Its subcellular location is the cytoplasm. It catalyses the reaction adenosine(1518)/adenosine(1519) in 16S rRNA + 4 S-adenosyl-L-methionine = N(6)-dimethyladenosine(1518)/N(6)-dimethyladenosine(1519) in 16S rRNA + 4 S-adenosyl-L-homocysteine + 4 H(+). In terms of biological role, specifically dimethylates two adjacent adenosines (A1518 and A1519) in the loop of a conserved hairpin near the 3'-end of 16S rRNA in the 30S particle. May play a critical role in biogenesis of 30S subunits. This chain is Ribosomal RNA small subunit methyltransferase A, found in Mesomycoplasma hyopneumoniae (strain 232) (Mycoplasma hyopneumoniae).